A 191-amino-acid polypeptide reads, in one-letter code: Peptide methionine sulfoxide reductase (191 aa).

2 disordered regions span residues 1–20 and 168–191; these read MASS…TPEN and EKGG…KCYG.

This sequence belongs to the MsrA Met sulfoxide reductase family.

The enzyme catalyses L-methionyl-[protein] + [thioredoxin]-disulfide + H2O = L-methionyl-(S)-S-oxide-[protein] + [thioredoxin]-dithiol. It carries out the reaction [thioredoxin]-disulfide + L-methionine + H2O = L-methionine (S)-S-oxide + [thioredoxin]-dithiol. In terms of biological role, has an important function as a repair enzyme for proteins that have been inactivated by oxidation. Catalyzes the reversible oxidation-reduction of methionine sulfoxide in proteins to methionine. The sequence is that of Peptide methionine sulfoxide reductase from Fragaria ananassa (Strawberry).